Reading from the N-terminus, the 89-residue chain is NADH-ubiquinone oxidoreductase chain 4L (89 aa).

3 consecutive transmembrane segments (helical) span residues 1–21, 22–42, and 57–77; these read MNLT…NRKN, IILM…LILV, and IYII…LVAF.

This sequence belongs to the complex I subunit 4L family.

It is found in the mitochondrion membrane. The enzyme catalyses a ubiquinone + NADH + 5 H(+)(in) = a ubiquinol + NAD(+) + 4 H(+)(out). Its function is as follows. Core subunit of the mitochondrial membrane respiratory chain NADH dehydrogenase (Complex I) that is believed to belong to the minimal assembly required for catalysis. Complex I functions in the transfer of electrons from NADH to the respiratory chain. The immediate electron acceptor for the enzyme is believed to be ubiquinone. This chain is NADH-ubiquinone oxidoreductase chain 4L (ND4L), found in Cryphonectria parasitica (Chestnut blight fungus).